Reading from the N-terminus, the 272-residue chain is 3-methyl-2-oxobutanoate hydroxymethyltransferase (272 aa).

2 residues coordinate Mg(2+): Asp-43 and Asp-82. Residues 43–44 (DS), Asp-82, and Lys-112 each bind 3-methyl-2-oxobutanoate. Residue Glu-114 participates in Mg(2+) binding. Glu-179 functions as the Proton acceptor in the catalytic mechanism.

The protein belongs to the PanB family. As to quaternary structure, homodecamer; pentamer of dimers. The cofactor is Mg(2+).

It is found in the cytoplasm. The catalysed reaction is 3-methyl-2-oxobutanoate + (6R)-5,10-methylene-5,6,7,8-tetrahydrofolate + H2O = 2-dehydropantoate + (6S)-5,6,7,8-tetrahydrofolate. Its pathway is cofactor biosynthesis; (R)-pantothenate biosynthesis; (R)-pantoate from 3-methyl-2-oxobutanoate: step 1/2. Functionally, catalyzes the reversible reaction in which hydroxymethyl group from 5,10-methylenetetrahydrofolate is transferred onto alpha-ketoisovalerate to form ketopantoate. The polypeptide is 3-methyl-2-oxobutanoate hydroxymethyltransferase (Staphylococcus aureus (strain MRSA252)).